The primary structure comprises 121 residues: Large ribosomal subunit protein uL22 (121 aa).

Belongs to the universal ribosomal protein uL22 family. In terms of assembly, part of the 50S ribosomal subunit.

Its function is as follows. This protein binds specifically to 23S rRNA; its binding is stimulated by other ribosomal proteins, e.g. L4, L17, and L20. It is important during the early stages of 50S assembly. It makes multiple contacts with different domains of the 23S rRNA in the assembled 50S subunit and ribosome. In terms of biological role, the globular domain of the protein is located near the polypeptide exit tunnel on the outside of the subunit, while an extended beta-hairpin is found that lines the wall of the exit tunnel in the center of the 70S ribosome. This is Large ribosomal subunit protein uL22 from Synechococcus sp. (strain CC9605).